Here is a 248-residue protein sequence, read N- to C-terminus: UPF0736 protein BT9727_1080 (248 aa).

It belongs to the UPF0736 family.

This is UPF0736 protein BT9727_1080 from Bacillus thuringiensis subsp. konkukian (strain 97-27).